Reading from the N-terminus, the 72-residue chain is Protein kish-A (72 aa).

Positions 1 to 26 (MSAIFNFQSLLTVILLLICTCAYIRS) are cleaved as a signal peptide. Topologically, residues 27-53 (LAPSILDRNKTGLLGIFWKCARIGERK) are extracellular. N-linked (GlcNAc...) asparagine glycosylation is present at asparagine 35. Residues 54–71 (SPYVAICCIVMAFSILFI) form a helical membrane-spanning segment. Residue glutamine 72 is a topological domain, cytoplasmic.

Belongs to the KISH family.

The protein localises to the golgi apparatus membrane. Its function is as follows. Involved in the early part of the secretory pathway. The chain is Protein kish-A (Tmem167a) from Mus musculus (Mouse).